Reading from the N-terminus, the 461-residue chain is uncharacterized protein (461 aa).

3 LRR repeats span residues 119–140, 141–162, and 163–184; these read NVKK…EKMS, LLEV…QHCK, and NLKE…EYLK. One can recognise an LRRCT domain in the interval 197-237; the sequence is NPCVGEGGQEYRRKVIRVLPNLTKLDDKPVTTTDHQEAIED.

This is an uncharacterized protein from Caenorhabditis elegans.